A 441-amino-acid polypeptide reads, in one-letter code: Ribulose bisphosphate carboxylase large chain (441 aa).

Residue lysine 5 is modified to N6,N6,N6-trimethyllysine. Substrate contacts are provided by asparagine 114 and threonine 164. Lysine 166 (proton acceptor) is an active-site residue. Lysine 168 serves as a coordination point for substrate. Residues lysine 192, aspartate 194, and glutamate 195 each contribute to the Mg(2+) site. Position 192 is an N6-carboxylysine (lysine 192). Histidine 285 functions as the Proton acceptor in the catalytic mechanism. Substrate contacts are provided by arginine 286, histidine 318, and serine 370.

It belongs to the RuBisCO large chain family. Type I subfamily. As to quaternary structure, heterohexadecamer of 8 large chains and 8 small chains; disulfide-linked. The disulfide link is formed within the large subunit homodimers. Requires Mg(2+) as cofactor. The disulfide bond which can form in the large chain dimeric partners within the hexadecamer appears to be associated with oxidative stress and protein turnover.

It localises to the plastid. The protein resides in the chloroplast. It carries out the reaction 2 (2R)-3-phosphoglycerate + 2 H(+) = D-ribulose 1,5-bisphosphate + CO2 + H2O. The catalysed reaction is D-ribulose 1,5-bisphosphate + O2 = 2-phosphoglycolate + (2R)-3-phosphoglycerate + 2 H(+). RuBisCO catalyzes two reactions: the carboxylation of D-ribulose 1,5-bisphosphate, the primary event in carbon dioxide fixation, as well as the oxidative fragmentation of the pentose substrate in the photorespiration process. Both reactions occur simultaneously and in competition at the same active site. In Pellaea andromedifolia (Coffee fern), this protein is Ribulose bisphosphate carboxylase large chain.